A 205-amino-acid polypeptide reads, in one-letter code: DUF724 domain-containing protein 4 (205 aa).

Residues 28-59 (DASGRGKRRRVEQEHHSDLNNETAAPTGGSAG) form a disordered region. One can recognise a DUF724 domain in the interval 63–189 (VLPFTKTLAS…MADDYSKLKK (127 aa)).

Expressed in roots, leaves, stems, flowers and siliques.

It localises to the nucleus. May be involved in the polar growth of plant cells via transportation of RNAs. In Arabidopsis thaliana (Mouse-ear cress), this protein is DUF724 domain-containing protein 4.